We begin with the raw amino-acid sequence, 127 residues long: Group 3 truncated hemoglobin ctb (127 aa).

Heme-binding residues include Y64 and H72.

Belongs to the truncated hemoglobin family. Group III subfamily. In terms of assembly, monomer. Heme serves as cofactor.

Its subcellular location is the cytoplasm. Functionally, has been suggested to be involved in cytochrome c peroxidase or P450-like oxygen chemistry or cyanide detoxification. The high oxygen affinity of this protein suggests that it probably does not function as an oxygen transporter. This Campylobacter jejuni subsp. jejuni serotype O:2 (strain ATCC 700819 / NCTC 11168) protein is Group 3 truncated hemoglobin ctb (ctb).